The primary structure comprises 467 residues: Venom prothrombin activator omicarin-C catalytic subunit (467 aa).

Positions 1–20 (MAPQLLLCLILTFLWSLPEA) are cleaved as a signal peptide. Residues 21–40 (ESNVFLKSKVANRFLQRTKR) constitute a propeptide that is removed on maturation. Residues 41 to 86 (ANSLFEEFRSGNIERECIEERCSKEEAREVFEDDEKTETFWNVYVD) form the Gla domain. Glu46, Glu47, Glu54, Glu56, Glu59, Glu60, Glu65, Glu66, Glu69, Glu72, and Glu75 each carry 4-carboxyglutamate. An intrachain disulfide couples Cys57 to Cys62. An EGF-like 1; calcium-binding domain is found at 86–122 (DGDQCSSNPCHYRGTCKDGIGSYTCTCLFGYEGKNCE). 11 disulfides stabilise this stretch: Cys90–Cys101, Cys95–Cys110, Cys112–Cys121, Cys129–Cys140, Cys136–Cys149, Cys151–Cys164, Cys172–Cys329, Cys216–Cys221, Cys236–Cys252, Cys377–Cys391, and Cys402–Cys430. Ser92 carries O-linked (Hex...) serine glycosylation. An EGF-like 2 domain is found at 129-164 (CRVDNGNCWHFCKPVQNDIQCSCAEGYLLGEDGHSC). Positions 182 to 209 (REASLPDFVQSQNATLLKKSDNPSPDIR) are cleaved as a propeptide — activation peptide. One can recognise a Peptidase S1 domain in the interval 210–454 (IVNGMDCKLG…FILWIKRIMR (245 aa)). His251 functions as the Charge relay system in the catalytic mechanism. N-linked (GlcNAc...) asparagine glycosylation occurs at Asn254. Asp309 acts as the Charge relay system in catalysis. Ser406 functions as the Charge relay system in the catalytic mechanism.

It belongs to the peptidase S1 family. Snake venom subfamily. Heterodimer of a light and a heavy chains; disulfide-linked. Is associated with omicarin-C non-catalytic subunit (AC Q58L90) in a non-covalent manner. In terms of processing, gamma-carboxyglutamate residues are formed by vitamin K dependent carboxylation. These residues are essential for the binding of calcium. Expressed by the venom gland.

It localises to the secreted. The catalysed reaction is Selective cleavage of Arg-|-Thr and then Arg-|-Ile bonds in prothrombin to form thrombin.. With respect to regulation, activated by calcium and negatively charged phospholipids. Its function is as follows. Snake prothrombin activator that attacks the hemostatic system of prey. This catalytic subunit is functionally similar to blood coagulation factor Xa. It requires a non-catalytic subunit present in the venom, which is similar to coagulation factor Va, to be fully active. This Oxyuranus microlepidotus (Inland taipan) protein is Venom prothrombin activator omicarin-C catalytic subunit.